The primary structure comprises 509 residues: UDP-N-acetylmuramoyl-L-alanyl-D-glutamate--2,6-diaminopimelate ligase (509 aa).

S30 is a UDP-N-acetyl-alpha-D-muramoyl-L-alanyl-D-glutamate binding site. G110–T116 contributes to the ATP binding site. Residues T152–T153, S179, Q185, and R187 contribute to the UDP-N-acetyl-alpha-D-muramoyl-L-alanyl-D-glutamate site. At K219 the chain carries N6-carboxylysine. Residues R385, D409 to R412, G476, and E480 contribute to the meso-2,6-diaminopimelate site. Residues D409–R412 carry the Meso-diaminopimelate recognition motif motif.

This sequence belongs to the MurCDEF family. MurE subfamily. The cofactor is Mg(2+). Carboxylation is probably crucial for Mg(2+) binding and, consequently, for the gamma-phosphate positioning of ATP.

It is found in the cytoplasm. The catalysed reaction is UDP-N-acetyl-alpha-D-muramoyl-L-alanyl-D-glutamate + meso-2,6-diaminopimelate + ATP = UDP-N-acetyl-alpha-D-muramoyl-L-alanyl-gamma-D-glutamyl-meso-2,6-diaminopimelate + ADP + phosphate + H(+). The protein operates within cell wall biogenesis; peptidoglycan biosynthesis. In terms of biological role, catalyzes the addition of meso-diaminopimelic acid to the nucleotide precursor UDP-N-acetylmuramoyl-L-alanyl-D-glutamate (UMAG) in the biosynthesis of bacterial cell-wall peptidoglycan. The chain is UDP-N-acetylmuramoyl-L-alanyl-D-glutamate--2,6-diaminopimelate ligase from Geobacter sulfurreducens (strain ATCC 51573 / DSM 12127 / PCA).